Here is a 281-residue protein sequence, read N- to C-terminus: Ribosomal RNA small subunit methyltransferase A (281 aa).

The S-adenosyl-L-methionine site is built by Asn21, Leu23, Gly48, Glu69, Asp92, and Asn113.

It belongs to the class I-like SAM-binding methyltransferase superfamily. rRNA adenine N(6)-methyltransferase family. RsmA subfamily.

The protein resides in the cytoplasm. The catalysed reaction is adenosine(1518)/adenosine(1519) in 16S rRNA + 4 S-adenosyl-L-methionine = N(6)-dimethyladenosine(1518)/N(6)-dimethyladenosine(1519) in 16S rRNA + 4 S-adenosyl-L-homocysteine + 4 H(+). Functionally, specifically dimethylates two adjacent adenosines (A1518 and A1519) in the loop of a conserved hairpin near the 3'-end of 16S rRNA in the 30S particle. May play a critical role in biogenesis of 30S subunits. This is Ribosomal RNA small subunit methyltransferase A from Ralstonia nicotianae (strain ATCC BAA-1114 / GMI1000) (Ralstonia solanacearum).